The sequence spans 162 residues: Endoribonuclease YbeY (162 aa).

Residues H127, H131, and H137 each coordinate Zn(2+).

The protein belongs to the endoribonuclease YbeY family. Zn(2+) serves as cofactor.

Its subcellular location is the cytoplasm. Single strand-specific metallo-endoribonuclease involved in late-stage 70S ribosome quality control and in maturation of the 3' terminus of the 16S rRNA. This is Endoribonuclease YbeY from Acetivibrio thermocellus (strain ATCC 27405 / DSM 1237 / JCM 9322 / NBRC 103400 / NCIMB 10682 / NRRL B-4536 / VPI 7372) (Clostridium thermocellum).